The sequence spans 227 residues: Phosphatidylethanolamine-binding protein 4 (227 aa).

The signal sequence occupies residues 1-22 (MGWTMRLVTAALLLGLMMVVTG). An N-linked (GlcNAc...) (complex) asparagine glycan is attached at N169. Residues 188–227 (EPEASTQFMTQNYQDSPTLQAPRERASEPKHKNQAEIAAC) are important for secretion. Residues 202-227 (DSPTLQAPRERASEPKHKNQAEIAAC) are disordered. Residues 209 to 221 (PRERASEPKHKNQ) show a composition bias toward basic and acidic residues.

It belongs to the phosphatidylethanolamine-binding protein family.

The protein localises to the secreted. Promotes AKT phosphorylation, suggesting a possible role in the PI3K-AKT signaling pathway. This Homo sapiens (Human) protein is Phosphatidylethanolamine-binding protein 4 (PEBP4).